The chain runs to 657 residues: Glycogen debranching enzyme (657 aa).

Asp-336 acts as the Nucleophile in catalysis. Glu-371 (proton donor) is an active-site residue. Residues 460–479 form a disordered region; sequence ANGEENRDGTNNNHSFNHGI.

The protein belongs to the glycosyl hydrolase 13 family.

The enzyme catalyses Hydrolysis of (1-&gt;6)-alpha-D-glucosidic linkages to branches with degrees of polymerization of three or four glucose residues in limit dextrin.. It functions in the pathway glycan degradation; glycogen degradation. Removes maltotriose and maltotetraose chains that are attached by 1,6-alpha-linkage to the limit dextrin main chain, generating a debranched limit dextrin. This chain is Glycogen debranching enzyme, found in Enterobacter sp. (strain 638).